We begin with the raw amino-acid sequence, 451 residues long: Ubiquitin hydrolase B (451 aa).

Residues 19–450 (RGLINTSNTC…EAYLLLYQLV (432 aa)) enclose the USP domain. A compositionally biased stretch (low complexity) spans 83–115 (NNSNSTTTTSSSSTTATTTSTSNNNKSQTPTSP). A disordered region spans residues 83-154 (NNSNSTTTTS…PPINPKHFND (72 aa)). The segment covering 116 to 135 (IQQHHQSQTNGLSNQPSVAT) has biased composition (polar residues). His-399 serves as the catalytic Nucleophile. Residue His-408 is the Proton acceptor of the active site.

Belongs to the peptidase C19 family. In terms of assembly, interacts with mkkA (via F-box/WD40 domains).

The catalysed reaction is Thiol-dependent hydrolysis of ester, thioester, amide, peptide and isopeptide bonds formed by the C-terminal Gly of ubiquitin (a 76-residue protein attached to proteins as an intracellular targeting signal).. Required for proper prespore cell patterning. Plays a role in stabilizing mkkA by preventing it from being targeted for degradation. ubcB and ubpB differentially control ubiquitination/deubiquitination and degradation of mkkA in a cell-type-specific and temporally regulated manner. This chain is Ubiquitin hydrolase B (ubpB), found in Dictyostelium discoideum (Social amoeba).